The chain runs to 1228 residues: MKTWGSMRSIFMHADGVDWMLMGLGLIGAVGDGFITPILFFITAMLLNDFGSFSFNDETFMQPISKNALAMLYVACASWVICFLEGYCWTRTGERQAAKMRERYLRAVLRQDVGYFDLHVTSTSDIITSVSSDSLVIQDFLSEKLPNILMNASAFVGSYIVGFMLLWRLTIVGFPFIILLLIPGLMYGRALIGISRKIREEYNEAGSIAEQAISSVRTVYAFVSEKKMIEKFSDALQGSVKLGLRQGLAKGIAIGSNGIVYAIWGFLTWYGSRMVMNYGYKGGTVSTVTVCVTFGGTALGQALSNLKYFSEAFVAGERIQKMIKRVPDIDSDNLNGHILETIRGEVEFNNVKCKYPSRPETLIFDDLCLKIPSGKTVALVGGSGSGKSTVISLLQRFYDPNEGDILIDSVSINNMQVKWLRSQMGMVSQEPSLFATSIKENILFGKEDASFDEVVEAAKASNAHNFISQFPHGYQTQVGERGVHMSGGQKQRIAIARALIKSPIILLLDEATSALDLESERVVQEALDNASVGRTTIVIAHRLSTIRNADIICVLHNGCIVETGSHDKLMEIDGKYTSLVRLQQMKNEESCDNTSVGVKEGRVSSLRNDLDYNPRDLAHSMSSSIVTNLSDSIPQDKKPLVPSFKRLMAMNRPEWKHALCGCLSASLGGAVQPIYAYSSGLMISVFFLTNHEQIKENTRIYVLLFFGLALFTFFTSISQQYSFSYMGEYLTKRIREQMLSKILTFEVNWFDEEENSSGAICSRLAKDANVVRSLVGERMSLLVQTISTVMVACTIGLVIAWRFTIVMISVQPVIIVCYYIQRVLLKNMSKKAIIAQDESSKLAAEAVSNIRTITTFSSQERIMKLLERVQEGPRRESARQSWLAGIMLGTTQSLITCTSALNFWYGGKLIADGKMVSKAFFELFLIFKTTGRAIAEAGTMTTDLAKGSNSVDSVFTVLDRRTTIEPENPDGYILEKIKGQITFLNVDFAYPTRPNMVIFNNFSIEIHEGKSTAIVGPSRSGKSTVIGLIERFYDPLQGIVKIDGRDIRSYHLRSLRQHMSLVSQEPTLFAGTIRENIMYGRASNKIDESEIIEAGKTANAHEFITSLSDGYDTYCGDRGVQLSGGQKQRIAIARTILKNPSILLLDEATSALDSQSERVVQDALEHVMVGKTSVVIAHRLSTIQNCDTIAVLDKGKVVESGTHASLLAKGPTGSYFSLVSLQRKVRYV.

A run of 6 helical transmembrane segments spans residues 22–42 (MGLG…LFFI), 69–89 (LAML…GYCW), 145–167 (LPNI…MLLW), 171–193 (IVGF…ALIG), 251–271 (GIAI…TWYG), and 283–303 (GTVS…GQAL). The ABC transmembrane type-1 1 domain occupies 22–311 (MGLGLIGAVG…ALSNLKYFSE (290 aa)). Positions 346–582 (VEFNNVKCKY…DGKYTSLVRL (237 aa)) constitute an ABC transporter 1 domain. 381–388 (GGSGSGKS) is an ATP binding site. 3 N-linked (GlcNAc...) asparagine glycosylation sites follow: Asn-529, Asn-593, and Asn-628. An ABC transmembrane type-1 2 domain is found at 658–946 (ALCGCLSASL…AGTMTTDLAK (289 aa)). A run of 2 helical transmembrane segments spans residues 667–687 (LGGA…SVFF) and 700–720 (IYVL…ISQQ). Asn-755 carries an N-linked (GlcNAc...) asparagine glycan. The next 2 membrane-spanning stretches (helical) occupy residues 781-801 (LLVQ…VIAW) and 805-825 (IVMI…RVLL). N-linked (GlcNAc...) asparagine glycosylation is present at Asn-827. A run of 2 helical transmembrane segments spans residues 881–901 (SWLA…TSAL) and 920–940 (FFEL…AGTM). Positions 981–1219 (ITFLNVDFAY…GPTGSYFSLV (239 aa)) constitute an ABC transporter 2 domain. N-linked (GlcNAc...) asparagine glycosylation is present at Asn-1001. 1016 to 1023 (GPSRSGKS) serves as a coordination point for ATP.

Belongs to the ABC transporter superfamily. ABCB family. Multidrug resistance exporter (TC 3.A.1.201) subfamily.

It localises to the membrane. In Arabidopsis thaliana (Mouse-ear cress), this protein is ABC transporter B family member 16 (ABCB16).